The primary structure comprises 320 residues: D-alanine--D-alanine ligase (320 aa).

One can recognise an ATP-grasp domain in the interval 104 to 308; that stretch reads KRVCLSHGVP…YEDLCVEILR (205 aa). 134-189 provides a ligand contact to ATP; the sequence is AAEFGMPLMLKAPHEGSTIGIAKVETAEGMQAGFDLCAKYDDVVLVEQFVKGRELT. Mg(2+)-binding residues include Asp-261, Glu-275, and Asn-277.

It belongs to the D-alanine--D-alanine ligase family. It depends on Mg(2+) as a cofactor. Mn(2+) is required as a cofactor.

It localises to the cytoplasm. The catalysed reaction is 2 D-alanine + ATP = D-alanyl-D-alanine + ADP + phosphate + H(+). The protein operates within cell wall biogenesis; peptidoglycan biosynthesis. Functionally, cell wall formation. The chain is D-alanine--D-alanine ligase from Janthinobacterium sp. (strain Marseille) (Minibacterium massiliensis).